A 352-amino-acid chain; its full sequence is 7,8-didemethyl-8-hydroxy-5-deazariboflavin synthase (352 aa).

In terms of domain architecture, Radical SAM core spans 35–275 (ITFSKNAFIP…EGISIQVPPN (241 aa)). [4Fe-4S] cluster contacts are provided by Cys49, Cys53, and Cys56.

The protein belongs to the radical SAM superfamily. CofG family. In terms of assembly, consists of two subunits, CofG and CofH. [4Fe-4S] cluster is required as a cofactor.

The enzyme catalyses 5-amino-5-(4-hydroxybenzyl)-6-(D-ribitylimino)-5,6-dihydrouracil + S-adenosyl-L-methionine = 7,8-didemethyl-8-hydroxy-5-deazariboflavin + 5'-deoxyadenosine + L-methionine + NH4(+) + H(+). The protein operates within cofactor biosynthesis; coenzyme F0 biosynthesis. Its function is as follows. Catalyzes the radical-mediated synthesis of 7,8-didemethyl-8-hydroxy-5-deazariboflavin from 5-amino-5-(4-hydroxybenzyl)-6-(D-ribitylimino)-5,6-dihydrouracil. The sequence is that of 7,8-didemethyl-8-hydroxy-5-deazariboflavin synthase from Methanococcus maripaludis (strain C5 / ATCC BAA-1333).